A 448-amino-acid polypeptide reads, in one-letter code: Probable glycine dehydrogenase (decarboxylating) subunit 1 (448 aa).

The protein belongs to the GcvP family. N-terminal subunit subfamily. The glycine cleavage system is composed of four proteins: P, T, L and H. In this organism, the P 'protein' is a heterodimer of two subunits.

It carries out the reaction N(6)-[(R)-lipoyl]-L-lysyl-[glycine-cleavage complex H protein] + glycine + H(+) = N(6)-[(R)-S(8)-aminomethyldihydrolipoyl]-L-lysyl-[glycine-cleavage complex H protein] + CO2. In terms of biological role, the glycine cleavage system catalyzes the degradation of glycine. The P protein binds the alpha-amino group of glycine through its pyridoxal phosphate cofactor; CO(2) is released and the remaining methylamine moiety is then transferred to the lipoamide cofactor of the H protein. In Staphylococcus carnosus (strain TM300), this protein is Probable glycine dehydrogenase (decarboxylating) subunit 1.